A 252-amino-acid chain; its full sequence is MERLLIVNADDFGLSKGQNYGIIEACRNGIVTSTTALVNGQAIDHAVQLSRDEPSLAIGMHFVLTMGKPLTAMPGLTRDGVLGKWIWQLAEEDALPLEEITQELASQYLRFIELFGRKPTHLDSHHHVHMFPQIFPIVAKFAAEEGIALRIDRQPLSNDGDLPANLRSSQGFSSAFYGEEISEALFLQVLDDSSHRGERSLEVMCHPAFVDNTIRQSAYCFPRLTELDVLTSASLKYAIAERGYRLGSYHDV.

Mg(2+) is bound by residues H61 and H125.

Belongs to the YdjC deacetylase family. ChbG subfamily. As to quaternary structure, homodimer. Mg(2+) serves as cofactor.

It localises to the cytoplasm. The enzyme catalyses N,N'-diacetylchitobiose + H2O = N-acetyl-beta-D-glucosaminyl-(1-&gt;4)-D-glucosamine + acetate. It catalyses the reaction diacetylchitobiose-6'-phosphate + H2O = N'-monoacetylchitobiose-6'-phosphate + acetate. It functions in the pathway glycan degradation; chitin degradation. Functionally, involved in the degradation of chitin. ChbG is essential for growth on the acetylated chitooligosaccharides chitobiose and chitotriose but is dispensable for growth on cellobiose and chitosan dimer, the deacetylated form of chitobiose. Deacetylation of chitobiose-6-P and chitotriose-6-P is necessary for both the activation of the chb promoter by the regulatory protein ChbR and the hydrolysis of phosphorylated beta-glucosides by the phospho-beta-glucosidase ChbF. Catalyzes the removal of only one acetyl group from chitobiose-6-P to yield monoacetylchitobiose-6-P, the inducer of ChbR and the substrate of ChbF. The polypeptide is Chitooligosaccharide deacetylase (Escherichia coli O6:H1 (strain CFT073 / ATCC 700928 / UPEC)).